Consider the following 102-residue polypeptide: MYAIIETGGKQFRVEEGCKIFVEKLAADAGSEIAIDKVLMLGGDKFAVGAPYVENAKVTAEVIEHGRGEKVITFRKWRRNDSRKKQGHRQDYTALKIKTITA.

This sequence belongs to the bacterial ribosomal protein bL21 family. In terms of assembly, part of the 50S ribosomal subunit. Contacts protein L20.

Its function is as follows. This protein binds to 23S rRNA in the presence of protein L20. This Oleidesulfovibrio alaskensis (strain ATCC BAA-1058 / DSM 17464 / G20) (Desulfovibrio alaskensis) protein is Large ribosomal subunit protein bL21.